A 108-amino-acid polypeptide reads, in one-letter code: Small ribosomal subunit protein bS18 (108 aa).

The segment covering 1-12 (MSDITKQPANNI) has biased composition (polar residues). A disordered region spans residues 1–33 (MSDITKQPANNISSDDKKEVAKASAKSSVEGAK).

The protein belongs to the bacterial ribosomal protein bS18 family. As to quaternary structure, part of the 30S ribosomal subunit. Forms a tight heterodimer with protein bS6.

Binds as a heterodimer with protein bS6 to the central domain of the 16S rRNA, where it helps stabilize the platform of the 30S subunit. This is Small ribosomal subunit protein bS18 from Mycoplasmoides gallisepticum (strain R(low / passage 15 / clone 2)) (Mycoplasma gallisepticum).